A 295-amino-acid polypeptide reads, in one-letter code: Pyridoxal 5'-phosphate synthase subunit PdxS (295 aa).

Residue D25 participates in D-ribose 5-phosphate binding. K82 (schiff-base intermediate with D-ribose 5-phosphate) is an active-site residue. Position 154 (G154) interacts with D-ribose 5-phosphate. R166 provides a ligand contact to D-glyceraldehyde 3-phosphate. D-ribose 5-phosphate is bound by residues G215 and 236 to 237 (GS).

This sequence belongs to the PdxS/SNZ family. In terms of assembly, in the presence of PdxT, forms a dodecamer of heterodimers.

The catalysed reaction is aldehydo-D-ribose 5-phosphate + D-glyceraldehyde 3-phosphate + L-glutamine = pyridoxal 5'-phosphate + L-glutamate + phosphate + 3 H2O + H(+). It functions in the pathway cofactor biosynthesis; pyridoxal 5'-phosphate biosynthesis. Functionally, catalyzes the formation of pyridoxal 5'-phosphate from ribose 5-phosphate (RBP), glyceraldehyde 3-phosphate (G3P) and ammonia. The ammonia is provided by the PdxT subunit. Can also use ribulose 5-phosphate and dihydroxyacetone phosphate as substrates, resulting from enzyme-catalyzed isomerization of RBP and G3P, respectively. In Bacillus cereus (strain Q1), this protein is Pyridoxal 5'-phosphate synthase subunit PdxS.